The chain runs to 245 residues: Probable phosphatase YE2421 (245 aa).

Positions 7, 9, 15, 40, 73, 101, 131, 192, and 194 each coordinate Zn(2+).

The protein belongs to the PHP family. As to quaternary structure, homotrimer. Requires Zn(2+) as cofactor.

This is Probable phosphatase YE2421 from Yersinia enterocolitica serotype O:8 / biotype 1B (strain NCTC 13174 / 8081).